The chain runs to 375 residues: 23S rRNA (uracil(747)-C(5))-methyltransferase RlmC (375 aa).

[4Fe-4S] cluster contacts are provided by Cys3, Cys11, Cys14, and Cys87. S-adenosyl-L-methionine is bound by residues Gln212, Phe241, Glu262, and Asn307. The active-site Nucleophile is the Cys334.

It belongs to the class I-like SAM-binding methyltransferase superfamily. RNA M5U methyltransferase family. RlmC subfamily.

It catalyses the reaction uridine(747) in 23S rRNA + S-adenosyl-L-methionine = 5-methyluridine(747) in 23S rRNA + S-adenosyl-L-homocysteine + H(+). Functionally, catalyzes the formation of 5-methyl-uridine at position 747 (m5U747) in 23S rRNA. In Shigella boydii serotype 4 (strain Sb227), this protein is 23S rRNA (uracil(747)-C(5))-methyltransferase RlmC.